A 275-amino-acid chain; its full sequence is Ribosomal RNA small subunit methyltransferase A (275 aa).

S-adenosyl-L-methionine is bound by residues N19, L21, G46, E71, D94, and N117.

The protein belongs to the class I-like SAM-binding methyltransferase superfamily. rRNA adenine N(6)-methyltransferase family. RsmA subfamily.

It localises to the cytoplasm. The catalysed reaction is adenosine(1518)/adenosine(1519) in 16S rRNA + 4 S-adenosyl-L-methionine = N(6)-dimethyladenosine(1518)/N(6)-dimethyladenosine(1519) in 16S rRNA + 4 S-adenosyl-L-homocysteine + 4 H(+). Specifically dimethylates two adjacent adenosines (A1518 and A1519) in the loop of a conserved hairpin near the 3'-end of 16S rRNA in the 30S particle. May play a critical role in biogenesis of 30S subunits. This Burkholderia thailandensis (strain ATCC 700388 / DSM 13276 / CCUG 48851 / CIP 106301 / E264) protein is Ribosomal RNA small subunit methyltransferase A.